Here is a 421-residue protein sequence, read N- to C-terminus: Succinate--CoA ligase [ADP-forming] subunit beta, mitochondrial (421 aa).

The transit peptide at 1 to 26 (MRGLVNKLVSRSLSISGKWQNQQLRR) directs the protein to the mitochondrion. The ATP-grasp domain occupies 35–278 (AELMGKYGVN…PTQEDPREVA (244 aa)). Residues K74, 81-83 (GRG), and E141 each bind ATP. The Mg(2+) site is built by N233 and D247. Residues N298 and 355–357 (GIM) contribute to the substrate site.

The protein belongs to the succinate/malate CoA ligase beta subunit family. Heterodimer of an alpha and a beta subunit. Mg(2+) serves as cofactor.

The protein resides in the mitochondrion. It catalyses the reaction succinate + ATP + CoA = succinyl-CoA + ADP + phosphate. It participates in carbohydrate metabolism; tricarboxylic acid cycle; succinate from succinyl-CoA (ligase route): step 1/1. Its function is as follows. Succinyl-CoA synthetase functions in the citric acid cycle (TCA), coupling the hydrolysis of succinyl-CoA to the synthesis of ATP and thus represents the only step of substrate-level phosphorylation in the TCA. The beta subunit provides nucleotide specificity of the enzyme and binds the substrate succinate, while the binding sites for coenzyme A and phosphate are found in the alpha subunit. This Arabidopsis thaliana (Mouse-ear cress) protein is Succinate--CoA ligase [ADP-forming] subunit beta, mitochondrial.